Consider the following 101-residue polypeptide: Protein translation factor SUI1 homolog (101 aa).

The protein belongs to the SUI1 family.

In Aeropyrum pernix (strain ATCC 700893 / DSM 11879 / JCM 9820 / NBRC 100138 / K1), this protein is Protein translation factor SUI1 homolog.